We begin with the raw amino-acid sequence, 359 residues long: SAGA complex subunit Spt7 (359 aa).

As to quaternary structure, component of the Spt-Ada-Gcn5 acetyltransferase (SAGA) complex consisting of wda/Taf5L, Saf6, Taf9, Taf10b, Taf12, Ada1, Spt3, Spt7, Spt20, Sf3b3, Sf3b5, Nipped-A/Tra1, a histone acetyltransferase (HAT) module made up of Gcn5, Ada2b (Isoform B), Ada3 and Sgf29, and a deubiquitinase (DUB) module made up of not/nonstop, Sgf11 and e(y)2 tethered to SAGA by Atxn7. Interacts with Ada2b; the interaction is direct.

It is found in the nucleus. In terms of biological role, component of the transcription regulatory complex SAGA, a multiprotein complex that activates transcription by remodeling chromatin and mediating histone acetylation and deubiquitination. The SAGA complex predominantly acetylates histone H3. This Drosophila melanogaster (Fruit fly) protein is SAGA complex subunit Spt7.